The chain runs to 383 residues: MDRKEMISMILAGGQGSRLGILTKKLAKPAVPFGGKYRIIDFVLSNCSNSGIYTVGVLTQYKPLELNSHIGIGTPWDLDRRDGGVYVLPPYQEESGGNWYKGTADAIYQNISFVDNYNPEYVIILSGDHIYKMNYANMLKFHKEKKADVTIAVIEVPIEETYRFGIVNTKSDMEIYEFQEKPMKAKSTKASMGVYIFKWTLLKRFLKADQSDKNSSNDFGKNIIPNMLNSGIKMYAYPFRGYWKDVGTIQSLWEANMDLLKEDNELNLGDLNWRIYSVNHVEPAQYIGPKANIKSSIAVNGCEIYGEVKNSIISSGSIIGKNSKIIDSVIMPYSKIGDNVIINKALVGSNVVVRKNSIIGDGREITVIGSNKDIKAESLLVSS.

Alpha-D-glucose 1-phosphate is bound by residues Tyr100, Gly165, 180-181, and Ser191; that span reads EK.

The protein belongs to the bacterial/plant glucose-1-phosphate adenylyltransferase family. Homotetramer.

The enzyme catalyses alpha-D-glucose 1-phosphate + ATP + H(+) = ADP-alpha-D-glucose + diphosphate. It participates in glycan biosynthesis; glycogen biosynthesis. Its function is as follows. Involved in the biosynthesis of ADP-glucose, a building block required for the elongation reactions to produce glycogen. Catalyzes the reaction between ATP and alpha-D-glucose 1-phosphate (G1P) to produce pyrophosphate and ADP-Glc. The sequence is that of Glucose-1-phosphate adenylyltransferase from Clostridium kluyveri (strain ATCC 8527 / DSM 555 / NBRC 12016 / NCIMB 10680 / K1).